The following is a 270-amino-acid chain: Zinc finger protein ZAT2 (270 aa).

2 stretches are compositionally biased toward polar residues: residues 1–28 and 36–48; these read MSNT…YNQN and LTNN…SSSP. Residues 1 to 64 are disordered; that stretch reads MSNTSNSDPN…QPDPDASQIA (64 aa). The segment at 65 to 87 adopts a C2H2-type 1 zinc-finger fold; the sequence is RPCTECGKQFGSLKALFGHMRCH. The interval 95 to 119 is disordered; it reads INPPSNFKRRINSNAASSSSSWDPS. A compositionally biased stretch (low complexity) spans 106–115; sequence NSNAASSSSS. 2 consecutive C2H2-type zinc fingers follow at residues 148–170 and 211–233; these read FECD…RATH and HRCN…MRCH.

In terms of assembly, interacts (via the EAR motif) with TPL. In terms of tissue distribution, expressed exclusively in pollen.

It localises to the nucleus. In terms of biological role, mediates the regulation of male germ cell division by DUO1. The polypeptide is Zinc finger protein ZAT2 (Arabidopsis thaliana (Mouse-ear cress)).